The chain runs to 267 residues: Hydroxynaphthalene reductase-like protein Arp2 (267 aa).

4 residues coordinate NADP(+): isoleucine 25, asparagine 45, aspartate 71, and asparagine 98. Catalysis depends on proton donor residues serine 147 and serine 148. Residues tyrosine 162, lysine 166, valine 195, and threonine 197 each contribute to the NADP(+) site. Tyrosine 162 serves as the catalytic Proton acceptor. The Lowers pKa of active site Tyr role is filled by lysine 166.

The protein belongs to the short-chain dehydrogenases/reductases (SDR) family.

In terms of biological role, hydroxynaphthalene reductase-like protein; part of the Pks2 gene cluster that mediates the formation of infectious structures (appressoria), enabling these fungi to kill insects faster. The product of the Pks2 gene cluster is different from the one of Pks1 and has still not been identified. The protein is Hydroxynaphthalene reductase-like protein Arp2 of Metarhizium majus (strain ARSEF 297).